Consider the following 151-residue polypeptide: Small ribosomal subunit protein uS15 (151 aa).

The protein belongs to the universal ribosomal protein uS15 family.

The sequence is that of Small ribosomal subunit protein uS15 (RPS13) from Glycine max (Soybean).